Here is a 70-residue protein sequence, read N- to C-terminus: Conotoxin ArMKLT2-0112 (70 aa).

The signal sequence occupies residues 1-22 (MKLTCVLIIAVLFLTACQLTTG). A propeptide spanning residues 23–40 (EQKDHALRSTDKNSKLTR) is cleaved from the precursor. Residue Gln-41 is modified to Pyrrolidone carboxylic acid. 3 disulfides stabilise this stretch: Cys-42/Cys-56, Cys-49/Cys-60, and Cys-55/Cys-67.

It belongs to the conotoxin O1 superfamily. In terms of tissue distribution, expressed by the venom duct.

Its subcellular location is the secreted. This Conus arenatus (Sand-dusted cone) protein is Conotoxin ArMKLT2-0112.